The primary structure comprises 155 residues: Ribosomal RNA large subunit methyltransferase H (155 aa).

S-adenosyl-L-methionine-binding positions include Leu-73, Gly-104, and 123 to 128; that span reads LSPLTL.

The protein belongs to the RNA methyltransferase RlmH family. Homodimer.

It is found in the cytoplasm. It catalyses the reaction pseudouridine(1915) in 23S rRNA + S-adenosyl-L-methionine = N(3)-methylpseudouridine(1915) in 23S rRNA + S-adenosyl-L-homocysteine + H(+). Specifically methylates the pseudouridine at position 1915 (m3Psi1915) in 23S rRNA. The chain is Ribosomal RNA large subunit methyltransferase H from Pseudomonas putida (strain GB-1).